The following is a 105-amino-acid chain: Integration host factor (105 aa).

Positions 64–71 (LPKVGKVK) match the H2TH motif, binds DNA motif. A lid, binds DNA region spans residues 82–94 (APTRRLRGLGDRQ).

This sequence belongs to the actinobacterial IHF (aIHF) family. In terms of assembly, binds DNA as a monomer. (Microbial infection) Forms a complex with L5 Int and attP DNA. The complex binds attB to form products.

It is found in the cytoplasm. It localises to the nucleoid. Its function is as follows. A nucleoid-associated protein (NAP) that binds DNA without any sequence specificity. Compacts DNA. Binds along the whole chromosome in a dynamic manner, has equal affinity for the oriC site, attB and a randon 62% GC-rich sequence. Plays a role in transcription regulation. (Microbial infection) Stimulates temperate Mycobacterium phage L5 Int-mediated recombination in vitro using supercoiled attP (phage attachment site) DNA, linear attB DNA (bacterial attachment site) and L5 integrase (L5 Int or Int-L5, AC P22884). mIHF acts on L5 Int to stimulate formation of a specific intasome complex. mIHF probably stabilizes a sharp bend in the DNA during phage integration. In Mycolicibacterium smegmatis (strain ATCC 700084 / mc(2)155) (Mycobacterium smegmatis), this protein is Integration host factor.